A 277-amino-acid polypeptide reads, in one-letter code: Probable xyloglucan endotransglucosylase/hydrolase protein 11 (277 aa).

The first 24 residues, 1–24, serve as a signal peptide directing secretion; it reads MRGSDQKILLMVMVVVAVVAAAQG. The GH16 domain maps to 32–209; sequence VTWGNNYYQT…PKQMPYIAKF (178 aa). Asn-50 carries N-linked (GlcNAc...) asparagine glycosylation. Glu-107 functions as the Nucleophile in the catalytic mechanism. Residues 123-125 and 133-135 each bind xyloglucan; these read NTN and GKD. Asn-194 is a glycosylation site (N-linked (GlcNAc...) asparagine). Cystine bridges form between Cys-217–Cys-227 and Cys-260–Cys-273. Arg-265 contacts xyloglucan.

This sequence belongs to the glycosyl hydrolase 16 family. XTH group 1 subfamily. Post-translationally, contains at least one intrachain disulfide bond essential for its enzymatic activity.

It is found in the secreted. The protein resides in the cell wall. Its subcellular location is the extracellular space. The protein localises to the apoplast. The enzyme catalyses breaks a beta-(1-&gt;4) bond in the backbone of a xyloglucan and transfers the xyloglucanyl segment on to O-4 of the non-reducing terminal glucose residue of an acceptor, which can be a xyloglucan or an oligosaccharide of xyloglucan.. Functionally, may catalyze xyloglucan endohydrolysis (XEH) and/or endotransglycosylation (XET). Cleaves and religates xyloglucan polymers, an essential constituent of the primary cell wall, and thereby participates in cell wall construction of growing tissues. This Arabidopsis thaliana (Mouse-ear cress) protein is Probable xyloglucan endotransglucosylase/hydrolase protein 11 (XTH11).